Reading from the N-terminus, the 138-residue chain is Basic phospholipase A2 homolog Tbo-K49 (138 aa).

A signal peptide spans 1-16 (MRTLWIMAVLLVGVEG). Intrachain disulfides connect cysteine 42/cysteine 131, cysteine 44/cysteine 60, cysteine 59/cysteine 111, cysteine 65/cysteine 138, cysteine 66/cysteine 104, and cysteine 91/cysteine 102. The interval 121–133 (KKERINTKIFCKK) is important for membrane-damaging activities in eukaryotes and bacteria; heparin-binding.

In terms of assembly, monomer. Expressed by the venom gland.

It is found in the secreted. In terms of biological role, snake venom phospholipase A2 homolog that lacks catalytic activity. It induces local edema. Is myotoxic. A model of myotoxic mechanism has been proposed: an apo Lys49-PLA2 is activated by the entrance of a hydrophobic molecule (e.g. fatty acid) at the hydrophobic channel of the protein leading to a reorientation of a monomer. This reorientation causes a transition between 'inactive' to 'active' states, causing alignment of C-terminal and membrane-docking sites (MDoS) side-by-side and putting the membrane-disruption sites (MDiS) in the same plane, exposed to solvent and in a symmetric position for both monomers. The MDoS region stabilizes the toxin on membrane by the interaction of charged residues with phospholipid head groups. Subsequently, the MDiS region destabilizes the membrane with penetration of hydrophobic residues. This insertion causes a disorganization of the membrane, allowing an uncontrolled influx of ions (i.e. calcium and sodium), and eventually triggering irreversible intracellular alterations and cell death. In Craspedocephalus borneensis (Borneo pit viper), this protein is Basic phospholipase A2 homolog Tbo-K49.